Consider the following 566-residue polypeptide: DNA ligase B (566 aa).

Catalysis depends on K125, which acts as the N6-AMP-lysine intermediate.

The protein belongs to the NAD-dependent DNA ligase family. LigB subfamily.

The enzyme catalyses NAD(+) + (deoxyribonucleotide)n-3'-hydroxyl + 5'-phospho-(deoxyribonucleotide)m = (deoxyribonucleotide)n+m + AMP + beta-nicotinamide D-nucleotide.. Its function is as follows. Catalyzes the formation of phosphodiester linkages between 5'-phosphoryl and 3'-hydroxyl groups in double-stranded DNA using NAD as a coenzyme and as the energy source for the reaction. The chain is DNA ligase B from Pseudomonas putida (strain ATCC 700007 / DSM 6899 / JCM 31910 / BCRC 17059 / LMG 24140 / F1).